Reading from the N-terminus, the 322-residue chain is MMIKNKKKLLFLCLLVILIATAYISFVTGTIKLSFNDLFTKFTTGSNEAVDSIIDLRLPRILIALMVGAMLAVSGALLQAALQNPLAEANIIGVSSGALIMRALCMLFIPQLYFYLPLLSFIGGLIPFLIIILLHSKFRFNAVSMILVGVALFVLLNGVLEILTQNPLMKIPQGLTMKIWSDVYILAVSALLGLILTLLLSPKLNLLNLDDIQARSIGFNIDRYRWLTGLLAVFLASATVAIVGQLAFLGIIVPHVVRKLVGGNYRVLIPFSTVIGAWLLLVADLLGRVIQPPLEIPANAILMIVGGPMLIYLICQSQRNRI.

9 helical membrane passes run 9–29, 61–81, 89–109, 114–134, 143–163, 179–199, 233–253, 267–287, and 294–314; these read LLFL…FVTG, ILIA…LQAA, ANII…MLFI, FYLP…IILL, VSMI…LEIL, IWSD…LTLL, VFLA…GIIV, VLIP…DLLG, and LEIP…IYLI.

Belongs to the binding-protein-dependent transport system permease family. FecCD subfamily.

It is found in the cell membrane. Functionally, part of the binding-protein-dependent transport system for heme-iron. Responsible for the translocation of the substrate across the membrane. The polypeptide is Probable heme-iron transport system permease protein IsdF (isdF) (Staphylococcus aureus (strain Mu3 / ATCC 700698)).